A 339-amino-acid polypeptide reads, in one-letter code: Anthranilate phosphoribosyltransferase (339 aa).

Residues G81, 84–85 (GD), S89, 91–94 (NVSS), 109–117 (KHGNRALSS), and A121 contribute to the 5-phospho-alpha-D-ribose 1-diphosphate site. Position 81 (G81) interacts with anthranilate. Mg(2+) is bound at residue S93. N112 lines the anthranilate pocket. R167 serves as a coordination point for anthranilate. Mg(2+) is bound by residues D225 and E226.

This sequence belongs to the anthranilate phosphoribosyltransferase family. In terms of assembly, homodimer. Mg(2+) is required as a cofactor.

The enzyme catalyses N-(5-phospho-beta-D-ribosyl)anthranilate + diphosphate = 5-phospho-alpha-D-ribose 1-diphosphate + anthranilate. The protein operates within amino-acid biosynthesis; L-tryptophan biosynthesis; L-tryptophan from chorismate: step 2/5. In terms of biological role, catalyzes the transfer of the phosphoribosyl group of 5-phosphorylribose-1-pyrophosphate (PRPP) to anthranilate to yield N-(5'-phosphoribosyl)-anthranilate (PRA). The polypeptide is Anthranilate phosphoribosyltransferase (Brucella suis biovar 1 (strain 1330)).